The primary structure comprises 77 residues: UPF0346 protein lin1971 (77 aa).

It belongs to the UPF0346 family.

The protein is UPF0346 protein lin1971 of Listeria innocua serovar 6a (strain ATCC BAA-680 / CLIP 11262).